Reading from the N-terminus, the 289-residue chain is MEVFVVPVLADEGFEGPTKEVFQTPHWFDVGIGSVNLYLNKATALTIFAALFVGVIFWLGFRRAKIIPRGIQNLCESAYDFVDLQIARGVIGEKGARYTPYLLVLFSFVLVSNVLAIIPAAQFPATSRIAVPMVLAVVTWVMFIYAGIKSNGAGAYFKEMIDPAPTAPLAIRLLLGPIEILSTLIVRPFTLAIRLFANMFAGHLLLLVFSLGADYLLPKPPFVFGVASLLVAIVLTAFELVIDALQAYIITILTAAYIGGAMAHGEHEVAPSEELAEHAPVGVPAAAHA.

The next 7 helical transmembrane spans lie at 41–61 (KATALTIFAALFVGVIFWLGF), 101–121 (YLLVLFSFVLVSNVLAIIPAA), 129–149 (IAVPMVLAVVTWVMFIYAGIK), 166–186 (TAPLAIRLLLGPIEILSTLIV), 189–209 (FTLAIRLFANMFAGHLLLLVF), 222–242 (FVFGVASLLVAIVLTAFELVI), and 244–264 (ALQAYIITILTAAYIGGAMAH).

Belongs to the ATPase A chain family. F-type ATPases have 2 components, CF(1) - the catalytic core - and CF(0) - the membrane proton channel. CF(1) has five subunits: alpha(3), beta(3), gamma(1), delta(1), epsilon(1). CF(0) has three main subunits: a(1), b(2) and c(9-12). The alpha and beta chains form an alternating ring which encloses part of the gamma chain. CF(1) is attached to CF(0) by a central stalk formed by the gamma and epsilon chains, while a peripheral stalk is formed by the delta and b chains.

Its subcellular location is the cell membrane. In terms of biological role, key component of the proton channel; it plays a direct role in the translocation of protons across the membrane. This is ATP synthase subunit a from Frankia alni (strain DSM 45986 / CECT 9034 / ACN14a).